The chain runs to 104 residues: DNA-directed RNA polymerase subunit omega (104 aa).

This sequence belongs to the RNA polymerase subunit omega family. The RNAP catalytic core consists of 2 alpha, 1 beta, 1 beta' and 1 omega subunit. When a sigma factor is associated with the core the holoenzyme is formed, which can initiate transcription.

The catalysed reaction is RNA(n) + a ribonucleoside 5'-triphosphate = RNA(n+1) + diphosphate. Promotes RNA polymerase assembly. Latches the N- and C-terminal regions of the beta' subunit thereby facilitating its interaction with the beta and alpha subunits. This is DNA-directed RNA polymerase subunit omega (rpoZ) from Streptococcus pyogenes serotype M1.